Reading from the N-terminus, the 498-residue chain is Lysine--tRNA ligase (498 aa).

Glutamate 409 and glutamate 416 together coordinate Mg(2+).

It belongs to the class-II aminoacyl-tRNA synthetase family. Homodimer. Mg(2+) serves as cofactor.

It is found in the cytoplasm. It carries out the reaction tRNA(Lys) + L-lysine + ATP = L-lysyl-tRNA(Lys) + AMP + diphosphate. The chain is Lysine--tRNA ligase from Coxiella burnetii (strain CbuK_Q154) (Coxiella burnetii (strain Q154)).